We begin with the raw amino-acid sequence, 152 residues long: FAD synthase (152 aa).

Residues 16–17 (TF), 21–24 (HPGH), aspartate 101, and tyrosine 129 contribute to the ATP site.

This sequence belongs to the archaeal FAD synthase family. Homodimer. A divalent metal cation serves as cofactor.

It carries out the reaction FMN + ATP + H(+) = FAD + diphosphate. It participates in cofactor biosynthesis; FAD biosynthesis; FAD from FMN: step 1/1. Catalyzes the transfer of the AMP portion of ATP to flavin mononucleotide (FMN) to produce flavin adenine dinucleotide (FAD) coenzyme. The protein is FAD synthase of Methanocaldococcus vulcanius (strain ATCC 700851 / DSM 12094 / M7) (Methanococcus vulcanius).